Here is a 127-residue protein sequence, read N- to C-terminus: LIM domain-containing protein 2 (127 aa).

M1 is modified (N-acetylmethionine). Positions 1-24 are disordered; the sequence is MFQAAGAAQATPSHDAKGGGSSTV. One can recognise an LIM zinc-binding domain in the interval 38-98; that stretch reads ETCAACQKTV…KPHFQQLFKS (61 aa). Positions 40, 43, 61, 64, 67, 70, 88, and 91 each coordinate Zn(2+).

Interacts with ILK.

It localises to the cytoplasm. The protein localises to the nucleus. Functionally, acts as an activator of the protein-kinase ILK, thereby regulating cell motility. This chain is LIM domain-containing protein 2, found in Homo sapiens (Human).